We begin with the raw amino-acid sequence, 513 residues long: MTRVINLDGESLTIEDVIAIARQGVACRIDDSAIEAVNASRKIVDDIVSEKRVVYGVTTGFGSLCNVSISPEDTVQLQENLIRTHASGFGDPLPEDAVRAIMLIRINSLVKGYSGIRLSTIEKLLELLNKGVHPYIPEKGSLGASGDLAPLAHMVLPMLGLGKAYYKGELLSGQEALDKAGIDKISLAAKEGLALINGTTVLTAIGALATYDAIQLLKLSDLAGALSLEVHNGITSPFEENLHTIRPQSGQLATARNIRNLHEGSQNTTVATQSRVQDPYTLRCIPQIHGASKDSIAYVKSKVDIEINSVTDNPIICKDGHVISGGNFHGEPMAQPFDFLGIAISEIGNVSERRVERLVNSQLSKLPSFLVKYPGLNSGFMITQYACASLASENKVLAHPASVDSIPSCENQEDFVSMGTTAARKAFEILKNSHRIVATEIMAACQALDLKSENHELGKGTKVAYDLFRKEVNFIEHDKHIEIYDELNKASTVIEDPSFLEAVEQAVELSIQF.

A cross-link (5-imidazolinone (Ala-Gly)) is located at residues 144–146; the sequence is ASG. At serine 145 the chain carries 2,3-didehydroalanine (Ser).

It belongs to the PAL/histidase family. In terms of processing, contains an active site 4-methylidene-imidazol-5-one (MIO), which is formed autocatalytically by cyclization and dehydration of residues Ala-Ser-Gly.

The protein localises to the cytoplasm. It catalyses the reaction L-histidine = trans-urocanate + NH4(+). The protein operates within amino-acid degradation; L-histidine degradation into L-glutamate; N-formimidoyl-L-glutamate from L-histidine: step 1/3. The chain is Histidine ammonia-lyase from Streptococcus pyogenes serotype M3 (strain ATCC BAA-595 / MGAS315).